Consider the following 294-residue polypeptide: MHSRFQAALTTLAADLQAAIAPMLADPHFPALLEADQVATLQQATGLDEDALAFALLPLAAACARADLSHFNVGAIARGVSGRWYFGGNMEFLGATMQQTVHAEQSAISHAWLRGETSLRAITVNYTPCGHCRQFMNELNSGLALRIHLPGREAHALEHYLPDAFGPKDLEIKTLLMDAQDHGFPVSGDALTQAAIQAANRCHAPYSHSPSGVALELKDGTIFSGSYAENAAFNPTLPPLQGALNLLSLNGYDYPAIQRAILAEKADAALIQWDATVATLKALGCQNIERVLLG.

CMP/dCMP-type deaminase domains are found at residues 48–168 (DEDA…FGPK) and 186–294 (VSGD…VLLG). 89–91 (NME) lines the substrate pocket. Zn(2+) is bound at residue H102. Residue E104 is the Proton donor of the active site. Zn(2+) is bound by residues C129 and C132.

This sequence belongs to the cytidine and deoxycytidylate deaminase family. Homodimer. It depends on Zn(2+) as a cofactor.

The catalysed reaction is cytidine + H2O + H(+) = uridine + NH4(+). It carries out the reaction 2'-deoxycytidine + H2O + H(+) = 2'-deoxyuridine + NH4(+). Its function is as follows. This enzyme scavenges exogenous and endogenous cytidine and 2'-deoxycytidine for UMP synthesis. This is Cytidine deaminase from Klebsiella pneumoniae (strain 342).